The chain runs to 927 residues: Autophagy-related protein 13 (927 aa).

Disordered stretches follow at residues 1 to 66 (MHQQ…PPAD), 334 to 359 (SLPQ…RSKP), 388 to 559 (LRSV…AQPG), 628 to 716 (TESM…TIRE), and 786 to 927 (QMQL…RRGW). Residues 14 to 30 (PGATTQPNLPSRSNSTR) show a composition bias toward polar residues. Polar residues-rich tracts occupy residues 393–402 (QPGSDTSSPP), 513–523 (PASTSRYSSSF), and 544–557 (GSSG…SVAQ). Residues 630–671 (SMTSSVQMQRSSSSSSRQLTSVPGMTAPASVSASSSPGKPLS) are compositionally biased toward low complexity. Residues 684-716 (LSENSIIDYSGQGRITSRQGRTSDNTQPGTIRE) are compositionally biased toward polar residues. Positions 793–803 (STQRPSDRLEP) are enriched in basic and acidic residues. The span at 850–868 (HKQTPPQSSRGSFNGSLNR) shows a compositional bias: polar residues. The segment covering 891-901 (PQGRRSIEEAR) has biased composition (basic and acidic residues).

It belongs to the ATG13 family. Fungi subfamily. As to quaternary structure, hypophosphorylated form interacts with ATG1 to form the ATG1-ATG13 kinase complex. The ATG1-ATG13 complex interacts with the ATG17-ATG29-ATG31 complex through direct interaction with ATG17.

It is found in the cytoplasm. The protein localises to the preautophagosomal structure. Its function is as follows. Activates the ATG1 kinase in a nutritional condition dependent manner through the TOR pathway, leading to autophagy. Involved in ATG9 and ATG23 cycling through the pre-autophagosomal structure. Also involved in cytoplasm to vacuole transport (Cvt) and more specifically in Cvt vesicle formation. Seems to play a role in the switching machinery regulating the conversion between the Cvt pathway and autophagy. Finally, ATG13 is also required for glycogen storage during stationary phase. Autophagy is required for proper vegetative growth, asexual/sexual reproduction, and full virulence. Autophagy is particularly involved in the biosynthesis of deoxynivalenol (DON), an important virulence determinant. This is Autophagy-related protein 13 from Gibberella zeae (strain ATCC MYA-4620 / CBS 123657 / FGSC 9075 / NRRL 31084 / PH-1) (Wheat head blight fungus).